A 188-amino-acid polypeptide reads, in one-letter code: Abscisic acid receptor PYL8 (188 aa).

Positions 25–176 are START-like; that stretch reads HELVDNQCSS…NLKSLADISE (152 aa). A disulfide bridge connects residues Cys32 and Cys157. Lys61 serves as a coordination point for abscisate. The residue at position 77 (Thr77) is a Phosphothreonine; by CARK1. The Gate loop signature appears at 85 to 89; it reads SGLPA. Abscisate contacts are provided by residues 89–94, 116–122, and Glu141; these read ATRSTE and RLKNYSS. The short motif at 115 to 117 is the Latch loop element; sequence HRL.

Belongs to the PYR/PYL/RCAR abscisic acid intracellular receptor family. In terms of assembly, monomer. Homodimer. Binds ABA on one subunit only. interacts with ABI1 and HAB1, and possibly with other PP2Cs. Binds to CARs protein in an ABA-independent manner, both at the plasma membrane and in the nucleus. Interacts directly with CAR1 and CAR4. Interacts with MYB44, MYB73 and MYB77 in an ABA-independent manner. Interacts with DDA1. Interacts with CARK1 in the cytosol. Binds to ABI1 when phosphorylated by CARK1. Interacts with AIP1 in the nucleus. In terms of processing, phosphorylated by CARK1 especially in response to abscisic acid (ABA); this phosphorylation promotes its stability and inhibitory ability to ABI1. Post-translationally, ubiquitinated in DDA1- and CDD complex-dependent manner. Ubiquitination leads to its subsequent proteasomal degradation.

The protein localises to the cytoplasm. It is found in the cytosol. Its subcellular location is the nucleus. It localises to the cell membrane. Its function is as follows. Receptor for abscisic acid (ABA) required for ABA-mediated responses such as stomatal closure and germination inhibition. Inhibits the activity of group-A protein phosphatases type 2C (PP2Cs) in an ABA-independent manner but more efficiently when activated by ABA. Confers enhanced sensitivity to ABA. Can be activated by both (-)-ABA and (+)-ABA. Mediates crosstalk between ABA and auxin signaling to regulate lateral root growth. Required for lateral root growth suppression by ABA. In response to auxin, promotes lateral root growth by enhancing MYB77-dependent transcription of the auxin-responsive gene IAA19. Enhances the abilities of MYB44 and MYB73 to activate IAA19 gene. The sequence is that of Abscisic acid receptor PYL8 from Arabidopsis thaliana (Mouse-ear cress).